Consider the following 604-residue polypeptide: Elongation factor 4 (604 aa).

The region spanning 7–190 is the tr-type G domain; sequence SRLRNFCIIA…IVDRVPAPPD (184 aa). Residues 19–24 and 136–139 each bind GTP; these read DHGKST and NKID.

Belongs to the TRAFAC class translation factor GTPase superfamily. Classic translation factor GTPase family. LepA subfamily.

The protein localises to the cell inner membrane. It catalyses the reaction GTP + H2O = GDP + phosphate + H(+). In terms of biological role, required for accurate and efficient protein synthesis under certain stress conditions. May act as a fidelity factor of the translation reaction, by catalyzing a one-codon backward translocation of tRNAs on improperly translocated ribosomes. Back-translocation proceeds from a post-translocation (POST) complex to a pre-translocation (PRE) complex, thus giving elongation factor G a second chance to translocate the tRNAs correctly. Binds to ribosomes in a GTP-dependent manner. The sequence is that of Elongation factor 4 from Synechococcus sp. (strain RCC307).